The following is a 327-amino-acid chain: Cytochrome P450 2C42 (327 aa).

C272 lines the heme pocket.

The protein belongs to the cytochrome P450 family. Heme serves as cofactor.

The protein resides in the endoplasmic reticulum membrane. It localises to the microsome membrane. The catalysed reaction is an organic molecule + reduced [NADPH--hemoprotein reductase] + O2 = an alcohol + oxidized [NADPH--hemoprotein reductase] + H2O + H(+). Functionally, cytochromes P450 are a group of heme-thiolate monooxygenases. In liver microsomes, this enzyme is involved in an NADPH-dependent electron transport pathway. It oxidizes a variety of structurally unrelated compounds, including steroids, fatty acids, and xenobiotics. The chain is Cytochrome P450 2C42 (CYP2C42) from Sus scrofa (Pig).